A 122-amino-acid polypeptide reads, in one-letter code: Fluoride-specific ion channel FluC 2 (122 aa).

4 helical membrane passes run 3–23 (ITAI…RMFI), 38–58 (TSIV…LNLT), 62–82 (LLLL…SFIY), and 93–113 (FMHL…CFYL). Gly-72 and Ser-75 together coordinate Na(+).

This sequence belongs to the fluoride channel Fluc/FEX (TC 1.A.43) family.

Its subcellular location is the cell inner membrane. The catalysed reaction is fluoride(in) = fluoride(out). With respect to regulation, na(+) is not transported, but it plays an essential structural role and its presence is essential for fluoride channel function. Fluoride-specific ion channel. Important for reducing fluoride concentration in the cell, thus reducing its toxicity. The protein is Fluoride-specific ion channel FluC 2 of Prochlorococcus marinus (strain MIT 9312).